Here is a 428-residue protein sequence, read N- to C-terminus: Mitochondrial distribution and morphology protein 12 (428 aa).

One can recognise an SMP-LTD domain in the interval 1-387; the sequence is MSFDINWNQL…WPSWICIDMN (387 aa). Disordered regions lie at residues 75 to 168 and 387 to 428; these read VMNE…APPL and NDDD…EAGE. Over residues 81-96 the composition is skewed to basic and acidic residues; the sequence is NDSKDEHLKNHGDGIN. Positions 106–133 are enriched in acidic residues; sequence LDDEDEDDEDDDEDDEDEEEEDEDDYDD. Positions 146-161 are enriched in polar residues; sequence LNFNENSTTPSANSFA. Residues 387–403 are compositionally biased toward acidic residues; the sequence is NDDDDEEEEEEESEDND. Residues 412–428 are compositionally biased toward basic and acidic residues; that stretch reads NDGKHGDGRTDETEAGE.

It belongs to the MDM12 family. In terms of assembly, component of the ER-mitochondria encounter structure (ERMES) or MDM complex, composed of MMM1, MDM10, MDM12 and MDM34. An MMM1 homodimer associates with one molecule of MDM12 on each side in a pairwise head-to-tail manner, and the SMP-LTD domains of MMM1 and MDM12 generate a continuous hydrophobic tunnel for phospholipid trafficking.

Its subcellular location is the mitochondrion outer membrane. It is found in the endoplasmic reticulum membrane. Its function is as follows. Component of the ERMES/MDM complex, which serves as a molecular tether to connect the endoplasmic reticulum (ER) and mitochondria. Components of this complex are involved in the control of mitochondrial shape and protein biogenesis, and function in nonvesicular lipid trafficking between the ER and mitochondria. MDM12 is required for the interaction of the ER-resident membrane protein MMM1 and the outer mitochondrial membrane-resident beta-barrel protein MDM10. The MDM12-MMM1 subcomplex functions in the major beta-barrel assembly pathway that is responsible for biogenesis of all mitochondrial outer membrane beta-barrel proteins, and acts in a late step after the SAM complex. The MDM10-MDM12-MMM1 subcomplex further acts in the TOM40-specific pathway after the action of the MDM12-MMM1 complex. Essential for establishing and maintaining the structure of mitochondria and maintenance of mtDNA nucleoids. The protein is Mitochondrial distribution and morphology protein 12 of Candida albicans (strain SC5314 / ATCC MYA-2876) (Yeast).